Consider the following 188-residue polypeptide: Chitin synthase 2 (188 aa).

The protein belongs to the chitin synthase family.

Its subcellular location is the cell membrane. The enzyme catalyses [(1-&gt;4)-N-acetyl-beta-D-glucosaminyl](n) + UDP-N-acetyl-alpha-D-glucosamine = [(1-&gt;4)-N-acetyl-beta-D-glucosaminyl](n+1) + UDP + H(+). Polymerizes chitin, a structural polymer of the cell wall and septum, by transferring the sugar moiety of UDP-GlcNAc to the non-reducing end of the growing chitin polymer. The polypeptide is Chitin synthase 2 (CHS2) (Exophiala jeanselmei (Dematiaceous fungus)).